The primary structure comprises 192 residues: Calcium-binding protein K (192 aa).

EF-hand domains lie at 60–95 (WDEASMVRMFTLFDSDGNGVIDVKEFITALYLMAKA) and 96–131 (PTLDKLGFFFDLFDSDKSGYLEREEVDKLVNIVVCC). Asp73, Asp75, Asn77, Glu84, Asp109, Asp111, Ser113, Tyr115, and Glu120 together coordinate Ca(2+).

Belongs to the recoverin family.

The polypeptide is Calcium-binding protein K (cbpK) (Dictyostelium discoideum (Social amoeba)).